The sequence spans 1131 residues: ATP-dependent helicase FUN30 (1131 aa).

The interval 1–70 (MSGSHSNDED…HTSKPLPSGS (70 aa)) is disordered. Residues 16 to 36 (PETSSPTKVASSSPLKPTSPT) are compositionally biased toward polar residues. The CUE-like region stretch occupies residues 76–111 (VNLAREFPDFSQTLVQAVFKSNSFNLQSARERLTRL). Residues 114 to 141 (QRQNWTWNKNASPKKSETPPPVKKSLPL) are disordered. The residue at position 232 (Ser232) is a Phosphoserine. 2 disordered regions span residues 242–273 (KYGR…YTES) and 327–350 (NDKD…ANES). The segment covering 250–271 (NDEEEEESMMTDDDDASGDDYT) has biased composition (acidic residues). Ser369 bears the Phosphoserine mark. Residues 400–533 (DLMNLGEDDD…GDDDDDDDDE (134 aa)) are disordered. The segment covering 405–416 (GEDDDDDNDDGN) has biased composition (acidic residues). Residues 417-432 (NDNNNSNNNNTAGADA) are compositionally biased toward low complexity. Residues 433–442 (TSKEKEDTKA) show a composition bias toward basic and acidic residues. At Ser451 the chain carries Phosphoserine. A compositionally biased stretch (acidic residues) spans 480–533 (EDEDDDVDLEAIDDELPQSEHEDDDYEEEDEDYNDEEEDVEYDDGDDDDDDDDE). In terms of domain architecture, Helicase ATP-binding spans 584–752 (NLLYQNKMSC…MSLLEFIMPN (169 aa)). 597–604 (DDMGLGKT) serves as a coordination point for ATP. The short motif at 703–706 (DEGH) is the DEGH box element. The Helicase C-terminal domain maps to 953–1108 (ALKKLLKTII…EDKKSQDVLE (156 aa)).

The protein belongs to the SNF2/RAD54 helicase family. Homodimer.

Its subcellular location is the nucleus. The protein resides in the chromosome. It catalyses the reaction ATP + H2O = ADP + phosphate + H(+). Its function is as follows. DNA helicase that possesses intrinsic ATP-dependent nucleosome-remodeling activity and is both required for DNA repair and heterochromatin organization. Promotes DNA end resection of double-strand breaks (DSBs) following DNA damage: probably acts by weakening histone DNA interactions in nucleosomes flanking DSBs, facilitating single-stranded DNA (ssDNA) production by the EXO1 and SGS1 machinery. Promotes gene silencing at heterochromatin by regulating the chromatin structure within or around silent loci. Also required for heterochromatin organization at centromeres. In Saccharomyces cerevisiae (strain ATCC 204508 / S288c) (Baker's yeast), this protein is ATP-dependent helicase FUN30 (FUN30).